The primary structure comprises 133 residues: MTLNLCVLTPNRIVWDSEVKEIILSTNTGQIGVLPNHAPIATAVDIGILRIRLNDQWLTMALMGGFARIGNNEITILVNDAEKGSDIDPQEAQETLELAEANLRKAEGKRQTIEANLALRRARTRVEAINAIS.

The protein belongs to the ATPase epsilon chain family. F-type ATPases have 2 components, CF(1) - the catalytic core - and CF(0) - the membrane proton channel. CF(1) has five subunits: alpha(3), beta(3), gamma(1), delta(1), epsilon(1). CF(0) has three main subunits: a, b and c.

It localises to the plastid. Its subcellular location is the chloroplast thylakoid membrane. Produces ATP from ADP in the presence of a proton gradient across the membrane. The chain is ATP synthase epsilon chain, chloroplastic from Eucalyptus globulus subsp. globulus (Tasmanian blue gum).